The chain runs to 209 residues: MTMIKICGLSTPETIEAAVQAGATHVGLVHFAKSPRHVELEKAAELRALVPESVKAVLLLVNEQPEETARAIQIVKPDVVQFHGSETPQWTKAVRDQLGIEVWKALGVREAATLEKSRRYEGAVDRLLFDSPAKKLPGGNGVTFQWDVLAGFEHHTAWGLAGGLTPDNVGDAIRQTGAELVDASSGVESAPGVKDIAKIEAFCEAARNA.

It belongs to the TrpF family.

It catalyses the reaction N-(5-phospho-beta-D-ribosyl)anthranilate = 1-(2-carboxyphenylamino)-1-deoxy-D-ribulose 5-phosphate. The protein operates within amino-acid biosynthesis; L-tryptophan biosynthesis; L-tryptophan from chorismate: step 3/5. This chain is N-(5'-phosphoribosyl)anthranilate isomerase, found in Erythrobacter litoralis (strain HTCC2594).